A 153-amino-acid chain; its full sequence is Putative phosphatidylglycerol/phosphatidylinositol transfer protein DDB_G0285639 (153 aa).

The signal sequence occupies residues 1–21; it reads MIIKILLLIISISLFLNISIG. N-linked (GlcNAc...) asparagine glycosylation is found at asparagine 17, asparagine 61, asparagine 87, asparagine 117, and asparagine 140.

It belongs to the NPC2 family. As to quaternary structure, monomer.

In terms of biological role, catalyzes the intermembrane transfer of phosphatidylglycerol and phosphatidylinositol. This Dictyostelium discoideum (Social amoeba) protein is Putative phosphatidylglycerol/phosphatidylinositol transfer protein DDB_G0285639.